The primary structure comprises 260 residues: Putative imidazole glycerol phosphate synthase subunit hisF3 (260 aa).

The active site involves aspartate 135.

This sequence belongs to the HisA/HisF family. In terms of assembly, heterodimer of HisH and HisF.

It is found in the cytoplasm. The enzyme catalyses 5-[(5-phospho-1-deoxy-D-ribulos-1-ylimino)methylamino]-1-(5-phospho-beta-D-ribosyl)imidazole-4-carboxamide + L-glutamine = D-erythro-1-(imidazol-4-yl)glycerol 3-phosphate + 5-amino-1-(5-phospho-beta-D-ribosyl)imidazole-4-carboxamide + L-glutamate + H(+). It participates in amino-acid biosynthesis; L-histidine biosynthesis; L-histidine from 5-phospho-alpha-D-ribose 1-diphosphate: step 5/9. Its function is as follows. IGPS catalyzes the conversion of PRFAR and glutamine to IGP, AICAR and glutamate. The HisF subunit catalyzes the cyclization activity that produces IGP and AICAR from PRFAR using the ammonia provided by the HisH subunit. This Vibrio vulnificus (strain YJ016) protein is Putative imidazole glycerol phosphate synthase subunit hisF3 (hisF3).